Consider the following 483-residue polypeptide: Regulatory protein ViaA (483 aa).

The protein belongs to the ViaA family. As to quaternary structure, homodimer. Interacts with RavA.

The protein localises to the cytoplasm. Functionally, component of the RavA-ViaA chaperone complex, which may act on the membrane to optimize the function of some of the respiratory chains. ViaA stimulates the ATPase activity of RavA. The chain is Regulatory protein ViaA from Salmonella typhi.